The primary structure comprises 344 residues: MVCARHQPGGLCLLLLLLCQFMEDRSAQAGNCWLRQAKNGRCQVLYKTELSKEECCSTGRLSTSWTEEDVNDNTLFKWMIFNGGAPNCIPCKETCENVDCGPGKKCRMNKKNKPRCVCAPDCSNITWKGPVCGLDGKTYRNECALLKARCKEQPELEVQYQGKCKKTCRDVFCPGSSTCVVDQTNNAYCVTCNRICPEPSSSEQSLCGNDGVTYSSACHLRKATCLLGRSIGLAYEGKCIKAKSCEDIQCGGGKKCLWDFKVGRGRCSLCDELCPDSKSDEPVCASDNATYASECAMKEAACSSGVLLEVKHSGSCNSISEETEEEEEEEDQDYSFPISSTLEW.

Residues 1-29 (MVCARHQPGGLCLLLLLLCQFMEDRSAQA) form the signal peptide. Positions 30–103 (GNCWLRQAKN…TCENVDCGPG (74 aa)) constitute a TB domain. 18 cysteine pairs are disulfide-bonded: C32–C55, C42–C88, C56–C91, C95–C106, C100–C116, C118–C150, C122–C143, C132–C164, C168–C179, C173–C189, C192–C225, C196–C218, C207–C239, C245–C256, C250–C267, C270–C302, C274–C295, and C284–C316. A Follistatin-like 1 domain is found at 94–117 (TCENVDCGPGKKCRMNKKNKPRCV). The Kazal-like 1 domain occupies 112–166 (NKPRCVCAPDCSNITWKGPVCGLDGKTYRNECALLKARCKEQPELEVQYQGKCKK). An N-linked (GlcNAc...) asparagine glycan is attached at N124. The Follistatin-like 2 domain maps to 167-190 (TCRDVFCPGSSTCVVDQTNNAYCV). The region spanning 186 to 241 (NAYCVTCNRICPEPSSSEQSLCGNDGVTYSSACHLRKATCLLGRSIGLAYEGKCIK) is the Kazal-like 2 domain. A Follistatin-like 3 domain is found at 244 to 268 (SCEDIQCGGGKKCLWDFKVGRGRCS). Residues 264–318 (RGRCSLCDELCPDSKSDEPVCASDNATYASECAMKEAACSSGVLLEVKHSGSCNS) enclose the Kazal-like 3 domain. N288 carries an N-linked (GlcNAc...) asparagine glycan. The tract at residues 315–344 (SCNSISEETEEEEEEEDQDYSFPISSTLEW) is disordered. Acidic residues predominate over residues 321-333 (EETEEEEEEEDQD).

In terms of assembly, interacts with GDF11. Interacts with activin A/INHBA. Interacts with myostatin/MSTN.

It is found in the secreted. Its subcellular location is the nucleus. It localises to the nucleolus. Its function is as follows. Multifunctional regulatory protein whose primary function is to antagonize members of the transforming growth factor beta (TGF-beta) superfamily including activin, myostatin, GDF11 or bone morphogenetic proteins (BMPs). Mechanistically, binds to these ligands in the extracellular space, blocking their type II receptor-binding site to inhibit downstream signaling. Plays an essential role in muscle fiber formation and growth both by preventing the repressive effects of myostatin and through SMAD3/AKT/mTOR signaling independently of myostatin. Also promotes neural differentiation by antagonizing the action BMP4. Acts as a specific inhibitor of the biosynthesis and secretion of pituitary follicle stimulating hormone (FSH) by sequestering activin A/INHBA. On the other hand, translocates into the nucleus where it down-regulates rRNA synthesis and ribosome biogenesis to maintain cellular energy homeostasis by binding to rDNA. The polypeptide is Follistatin (Rattus norvegicus (Rat)).